The chain runs to 208 residues: ATP phosphoribosyltransferase (208 aa).

This sequence belongs to the ATP phosphoribosyltransferase family. Short subfamily. Heteromultimer composed of HisG and HisZ subunits.

It localises to the cytoplasm. The catalysed reaction is 1-(5-phospho-beta-D-ribosyl)-ATP + diphosphate = 5-phospho-alpha-D-ribose 1-diphosphate + ATP. It participates in amino-acid biosynthesis; L-histidine biosynthesis; L-histidine from 5-phospho-alpha-D-ribose 1-diphosphate: step 1/9. Catalyzes the condensation of ATP and 5-phosphoribose 1-diphosphate to form N'-(5'-phosphoribosyl)-ATP (PR-ATP). Has a crucial role in the pathway because the rate of histidine biosynthesis seems to be controlled primarily by regulation of HisG enzymatic activity. In Thermotoga maritima (strain ATCC 43589 / DSM 3109 / JCM 10099 / NBRC 100826 / MSB8), this protein is ATP phosphoribosyltransferase (hisG).